We begin with the raw amino-acid sequence, 170 residues long: ATP synthase subunit b (170 aa).

A helical transmembrane segment spans residues 30-50 (FFFVLAIFLVVLAVIGTFVVP).

It belongs to the ATPase B chain family. As to quaternary structure, F-type ATPases have 2 components, F(1) - the catalytic core - and F(0) - the membrane proton channel. F(1) has five subunits: alpha(3), beta(3), gamma(1), delta(1), epsilon(1). F(0) has three main subunits: a(1), b(2) and c(10-14). The alpha and beta chains form an alternating ring which encloses part of the gamma chain. F(1) is attached to F(0) by a central stalk formed by the gamma and epsilon chains, while a peripheral stalk is formed by the delta and b chains.

Its subcellular location is the cell membrane. Its function is as follows. F(1)F(0) ATP synthase produces ATP from ADP in the presence of a proton or sodium gradient. F-type ATPases consist of two structural domains, F(1) containing the extramembraneous catalytic core and F(0) containing the membrane proton channel, linked together by a central stalk and a peripheral stalk. During catalysis, ATP synthesis in the catalytic domain of F(1) is coupled via a rotary mechanism of the central stalk subunits to proton translocation. Component of the F(0) channel, it forms part of the peripheral stalk, linking F(1) to F(0). The protein is ATP synthase subunit b of Mycobacterium ulcerans (strain Agy99).